The sequence spans 378 residues: Histone deacetylase 8 (378 aa).

The histone deacetylase stretch occupies residues Arg-15–Gly-325. Asp-102 is a binding site for substrate. Residue His-144 is the Proton acceptor of the active site. Gly-152 contributes to the substrate binding site. Residues Asp-179, His-181, and Asp-268 each contribute to the a divalent metal cation site. Residue Tyr-307 participates in substrate binding.

Belongs to the histone deacetylase family. HD type 1 subfamily. A divalent metal cation serves as cofactor.

Its subcellular location is the nucleus. It localises to the chromosome. The protein localises to the cytoplasm. The catalysed reaction is N(6)-acetyl-L-lysyl-[histone] + H2O = L-lysyl-[histone] + acetate. The enzyme catalyses N(6)-acetyl-L-lysyl-[protein] + H2O = L-lysyl-[protein] + acetate. It catalyses the reaction N(6)-(2E)-butenoyl-L-lysyl-[protein] + H2O = (2E)-2-butenoate + L-lysyl-[protein]. Its activity is regulated as follows. Its activity is inhibited by trichostatin A (TSA) and butyrate, 2 well known histone deacetylase inhibitors. Its function is as follows. Histone deacetylase that catalyzes the deacetylation of lysine residues on the N-terminal part of the core histones (H2A, H2B, H3 and H4). Histone deacetylation gives a tag for epigenetic repression and plays an important role in transcriptional regulation, cell cycle progression and developmental events. Histone deacetylases act via the formation of large multiprotein complexes. Also involved in the deacetylation of non-histone proteins. In addition to protein deacetylase activity, also has protein-lysine deacylase activity: acts as a protein decrotonylase by mediating decrotonylation ((2E)-butenoyl) of histones. This chain is Histone deacetylase 8 (hdac8), found in Danio rerio (Zebrafish).